Reading from the N-terminus, the 154-residue chain is Ribonuclease P protein subunit p21 (154 aa).

Ala2 bears the N-acetylalanine mark. The Zn(2+) site is built by Cys62, Cys65, Cys92, and Cys95. The disordered stretch occupies residues 112–154 (DRPEAQLGNQADSKPLQPLPNTAHSISDHLPEEKMQIQGSSDQ). Positions 137–146 (ISDHLPEEKM) are enriched in basic and acidic residues.

It belongs to the eukaryotic/archaeal RNase P protein component 4 family. In terms of assembly, RNase P consists of a catalytic RNA moiety and about 10 protein subunits; POP1, POP4, POP5, POP7, RPP14, RPP21, RPP25, RPP30, RPP38 and RPP40. Within the RNase P complex, POP1, POP7 and RPP25 form the 'finger' subcomplex, POP5, RPP14, RPP40 and homodimeric RPP30 form the 'palm' subcomplex, and RPP21, POP4 and RPP38 form the 'wrist' subcomplex. All subunits of the RNase P complex interact with the catalytic RNA.

It is found in the nucleus. Its subcellular location is the nucleolus. Component of ribonuclease P, a ribonucleoprotein complex that generates mature tRNA molecules by cleaving their 5'-ends. The sequence is that of Ribonuclease P protein subunit p21 (RPP21) from Macaca mulatta (Rhesus macaque).